The sequence spans 159 residues: MRGTPAYHAVSGVPCSACTCTQVAVQLALSWRGSMGRLKRCEVRRRPCALWAIVRVARIGALAAMLAVLSFALGCALVYPLWALAVHRPRVFSVLSGLLYGGGAVLWGLRRVCNALSYARVRRAGRRAAAQEPCVLVQAGEVGAMGLSSSAEVRPAQEC.

The next 2 membrane-spanning stretches (helical) occupy residues 59-79 (IGALAAMLAVLSFALGCALVY) and 91-113 (VFSVLSGLLYGGGAVLWGLRRVC).

It is found in the cell membrane. This is an uncharacterized protein from Treponema pallidum (strain Nichols).